The chain runs to 209 residues: MAKNYFDITLALAGVCQSARLVQQLAHQSQCDEPPLRVSLQSLLDLNPPSVRAVYGDNPANLRMGLETLQNVLNASSREGLGAELTWYTLGLIVLERKLNGNRGAQAELSRRIDALDRQLSHFDLLSDTLISAMASIYVDIISPLGPRIQVTGAPVVLQNTQIQAKVRAVLLAGIRSAVLWQQVGGGRFQLMFARNRLFKKAKQILSHT.

Belongs to the HflD family.

The protein resides in the cytoplasm. It localises to the cell inner membrane. The protein is High frequency lysogenization protein HflD homolog of Sodalis glossinidius (strain morsitans).